A 297-amino-acid chain; its full sequence is E3 ubiquitin-protein ligase TRIM52 (297 aa).

The RING-type; degenerate zinc finger occupies 20–62 (CAICLDYFKDPVSISCGHNFCRGCVTQLWSKEDEEDQNEEEDE). The tract at residues 72-167 (VGAMDGWDGS…DEDEDEELYP (96 aa)) is important for rapid proteolytic degradation by the proteasome. The segment at 222-263 (NDQGMCFKHQEALKLFCEVDKEAICVVCRESRSHKQHSVLPL) adopts a B box-type zinc-finger fold. The Zn(2+) site is built by Cys-227, His-230, Cys-249, and His-255.

The protein belongs to the TRIM/RBCC family. As to quaternary structure, (Microbial infection) Interacts with Japanese encephalitis virus non-structural protein 2 (NS2A); mediates the ubiquitination of NS2A, targeting it for proteasome-mediated degradation. Post-translationally, autoubiquitinated. Polyubiquitinated. Undergoes extremely rapid proteolytic degradation by the proteasome.

The protein resides in the cytoplasm. It localises to the cytosol. Its subcellular location is the nucleus. It catalyses the reaction S-ubiquitinyl-[E2 ubiquitin-conjugating enzyme]-L-cysteine + [acceptor protein]-L-lysine = [E2 ubiquitin-conjugating enzyme]-L-cysteine + N(6)-ubiquitinyl-[acceptor protein]-L-lysine.. The protein operates within protein modification; protein ubiquitination. Its function is as follows. E3 ubiquitin-protein ligase. Positively regulates the NF-kappa-B signaling pathway. In terms of biological role, (Microbial infection) Exhibits antiviral activity against Japanese encephalitis virus (JEV). Ubiquitinates the viral non-structural protein 2 (NS2A) and targets it for proteasome-mediated degradation. In Homo sapiens (Human), this protein is E3 ubiquitin-protein ligase TRIM52 (TRIM52).